The primary structure comprises 243 residues: HTH-type transcriptional repressor NagR (243 aa).

Residues 9 to 77 (IPIYYQIMEQ…KGRGTFVSKP (69 aa)) form the HTH gntR-type domain. The segment at residues 37–56 (EREYAEQFGISRMTVRQALS) is a DNA-binding region (H-T-H motif). Residues 89-90 (FT), 133-135 (RVR), Glu-145, 165-167 (SIY), Glu-222, and Tyr-228 each bind alpha-D-glucosamine 6-phosphate. N-acetyl-D-glucosamine 6-phosphate contacts are provided by residues 89–90 (FT), 133–135 (RVR), Glu-145, 165–167 (SIY), Glu-222, and Tyr-228.

In terms of assembly, homodimer. Forms dimers via the C-terminal effector-binding domain. At high concentrations, probably forms polymers along the DNA.

With respect to regulation, binding to DNA is allosterically inhibited by an effector molecule. Binding of the effector to the C-terminal domain leads to a conformational change that modulates binding to DNA and thereby regulates transcription of the target genes. Glucosamine-6-phosphate (GlcN6P) and/or N-acetylglucosamine-6-phosphate (GlcNAc6P) are putative effectors of NagR. Binding of GlcNAc6P may prevent the protein-protein interactions responsible for polymerization along the DNA, but not the specific DNA binding. Functionally, main transcriptional repressor of genes involved in N-acetylglucosamine (GlcNAc) transport and utilization. Represses the expression of the nagAB and nagP operons by binding directly within their upstream regions. Binds to the DNA consensus sequence 5'-ATTGGTATAGACAACT-3'. Also acts as a weak repressor of mapB expression. This chain is HTH-type transcriptional repressor NagR, found in Bacillus subtilis (strain 168).